The primary structure comprises 265 residues: Probable aquaporin TIP3-2 (265 aa).

A run of 2 helical transmembrane segments spans residues 32–52 and 62–82; these read LSEF…VYGL and LGGL…AVAV. The short motif at 92–94 is the NPA 1 element; that stretch reads NPA. The next 3 helical transmembrane spans lie at 110 to 130, 151 to 171, and 179 to 199; these read AALY…LLRL, ALLL…ATAV, and DIAP…GGPF. The short motif at 205–207 is the NPA 2 element; it reads NPA. A helical transmembrane segment spans residues 223 to 243; it reads WVYWLGPLIGAGMAGALYEFV.

The protein belongs to the MIP/aquaporin (TC 1.A.8) family. TIP (TC 1.A.8.10) subfamily. As to expression, expressed in leaves and at lower levels in roots.

The protein localises to the vacuole membrane. Functionally, aquaporins facilitate the transport of water and small neutral solutes across cell membranes. May be involved in transport from the vacuolar compartment to the cytoplasm. The chain is Probable aquaporin TIP3-2 (TIP3-2) from Oryza sativa subsp. japonica (Rice).